A 223-amino-acid chain; its full sequence is Cytidylate kinase (223 aa).

Position 10–18 (10–18 (GPASSGKST)) interacts with ATP.

It belongs to the cytidylate kinase family. Type 1 subfamily.

It is found in the cytoplasm. It carries out the reaction CMP + ATP = CDP + ADP. It catalyses the reaction dCMP + ATP = dCDP + ADP. The chain is Cytidylate kinase from Streptococcus pneumoniae (strain Taiwan19F-14).